Consider the following 220-residue polypeptide: Nitrile hydratase subunit beta (220 aa).

The protein belongs to the nitrile hydratase subunit beta family. As to quaternary structure, heterodimer of an alpha and a beta chain.

It carries out the reaction an aliphatic primary amide = an aliphatic nitrile + H2O. In terms of biological role, NHase catalyzes the hydration of various nitrile compounds to the corresponding amides. The sequence is that of Nitrile hydratase subunit beta (nthB) from Pseudomonas chlororaphis (Pseudomonas aureofaciens).